The sequence spans 492 residues: Ketol-acid reductoisomerase (NADP(+)) (492 aa).

One can recognise a KARI N-terminal Rossmann domain in the interval Leu-17–Ser-208. Residues Cys-45–Gln-48, Arg-68, Arg-76, Ser-78, and Asp-108–Gln-110 contribute to the NADP(+) site. Residue His-132 is part of the active site. Gly-158 lines the NADP(+) pocket. KARI C-terminal knotted domains are found at residues Ser-209–Glu-353 and Tyr-354–Met-487. Residues Asp-217, Glu-221, Glu-389, and Glu-393 each contribute to the Mg(2+) site. Ser-414 serves as a coordination point for substrate.

It belongs to the ketol-acid reductoisomerase family. Requires Mg(2+) as cofactor.

It catalyses the reaction (2R)-2,3-dihydroxy-3-methylbutanoate + NADP(+) = (2S)-2-acetolactate + NADPH + H(+). The enzyme catalyses (2R,3R)-2,3-dihydroxy-3-methylpentanoate + NADP(+) = (S)-2-ethyl-2-hydroxy-3-oxobutanoate + NADPH + H(+). It functions in the pathway amino-acid biosynthesis; L-isoleucine biosynthesis; L-isoleucine from 2-oxobutanoate: step 2/4. The protein operates within amino-acid biosynthesis; L-valine biosynthesis; L-valine from pyruvate: step 2/4. Involved in the biosynthesis of branched-chain amino acids (BCAA). Catalyzes an alkyl-migration followed by a ketol-acid reduction of (S)-2-acetolactate (S2AL) to yield (R)-2,3-dihydroxy-isovalerate. In the isomerase reaction, S2AL is rearranged via a Mg-dependent methyl migration to produce 3-hydroxy-3-methyl-2-ketobutyrate (HMKB). In the reductase reaction, this 2-ketoacid undergoes a metal-dependent reduction by NADPH to yield (R)-2,3-dihydroxy-isovalerate. The polypeptide is Ketol-acid reductoisomerase (NADP(+)) (Cytophaga hutchinsonii (strain ATCC 33406 / DSM 1761 / CIP 103989 / NBRC 15051 / NCIMB 9469 / D465)).